The chain runs to 248 residues: MLVIPAIDLYRKKVVRMVKGKKENTIFYEKDPIELVEKLVEEGFSLIHVVDLSRAIEESDENLPVLEKLSSYADHIQIGGGIRILEYAKKLLGMGFRRQIVSSKVLEDPSFLKKLKEIGVNPVFSLDTREGKVAFKGWLDEKDIDPVFLVNRLKEFGLEEIVHTEIEKDGTLKEHDFSLTERIALETGVKVIAAGGISSERSLEEALEVHRRTNGLLKGVIVGRAFLEGTLTVEVMKRYACQENNSVS.

Asp-8 (proton acceptor) is an active-site residue. Catalysis depends on Asp-127, which acts as the Proton donor.

It belongs to the HisA/HisF family.

The protein localises to the cytoplasm. It catalyses the reaction 1-(5-phospho-beta-D-ribosyl)-5-[(5-phospho-beta-D-ribosylamino)methylideneamino]imidazole-4-carboxamide = 5-[(5-phospho-1-deoxy-D-ribulos-1-ylimino)methylamino]-1-(5-phospho-beta-D-ribosyl)imidazole-4-carboxamide. It functions in the pathway amino-acid biosynthesis; L-histidine biosynthesis; L-histidine from 5-phospho-alpha-D-ribose 1-diphosphate: step 4/9. This chain is 1-(5-phosphoribosyl)-5-[(5-phosphoribosylamino)methylideneamino] imidazole-4-carboxamide isomerase, found in Thermotoga neapolitana (strain ATCC 49049 / DSM 4359 / NBRC 107923 / NS-E).